The chain runs to 416 residues: Deferrochelatase (416 aa).

Positions 1 to 28 (MSDEQKKPEQIHRRDILKWGAMAGAAVA) form a signal peptide, tat-type signal. Residue 241-243 (GTG) participates in heme b binding. The tract at residues 293–318 (QEDTFGRRKSSGAPFGQKKETDPVKL) is disordered. His326 and Arg339 together coordinate heme b.

The protein belongs to the DyP-type peroxidase family. As to quaternary structure, component of the iron transporter efeUOB/M complex composed of EfeU, EfeM and EfeB; EfeU is essential for the complex formation. The cofactor is heme b. Post-translationally, exported by the Tat system. The position of the signal peptide cleavage has not been experimentally proven.

It is found in the secreted. It localises to the cell membrane. It carries out the reaction heme b + 2 H(+) = protoporphyrin IX + Fe(2+). It catalyses the reaction 2 Fe(2+) + H2O2 + 2 H(+) = 2 Fe(3+) + 2 H2O. In terms of biological role, involved in the recovery of exogenous heme iron. Extracts iron from heme while preserving the protoporphyrin ring intact. Part of the iron transporter system efeUOB/M involved in iron import. Catalyzes the peroxide-mediated oxidation of Fe(2+) into Fe(3+); EfeM binds Fe(3+) and delivers it to the cell membrane permease EfeU. This Bacillus subtilis (strain 168) protein is Deferrochelatase.